A 43-amino-acid chain; its full sequence is Potassium channel toxin gamma-KTx 4.5 (43 aa).

4 cysteine pairs are disulfide-bonded: cysteine 5–cysteine 23, cysteine 11–cysteine 34, cysteine 20–cysteine 39, and cysteine 24–cysteine 41.

The protein belongs to the ergtoxin family. Gamma-KTx 4 subfamily. Expressed by the venom gland.

The protein resides in the secreted. Its function is as follows. Reversibly blocks Kv11/ERG potassium channels. This is Potassium channel toxin gamma-KTx 4.5 from Centruroides exilicauda (Bark scorpion).